A 218-amino-acid chain; its full sequence is UPF0177 protein YaiF (218 aa).

Transmembrane regions (helical) follow at residues 8 to 28, 48 to 68, 81 to 101, 123 to 143, and 163 to 183; these read SIIIATAFFLFILSQLPAVFL, FIILTLVVVTICIFIGIKCGF, ILLIFSLLIITFFIQKFVVQF, ILSSLLFPGQFVAVSILAPIL, and FFLSCFFFSYVHSGFSWDILG.

The protein belongs to the UPF0177 family.

The protein resides in the cell membrane. The sequence is that of UPF0177 protein YaiF (yaiF) from Lactococcus lactis subsp. lactis (strain IL1403) (Streptococcus lactis).